Here is a 476-residue protein sequence, read N- to C-terminus: Glycogen synthase (476 aa).

Position 15 (lysine 15) interacts with ADP-alpha-D-glucose.

Belongs to the glycosyltransferase 1 family. Bacterial/plant glycogen synthase subfamily.

The enzyme catalyses [(1-&gt;4)-alpha-D-glucosyl](n) + ADP-alpha-D-glucose = [(1-&gt;4)-alpha-D-glucosyl](n+1) + ADP + H(+). Its pathway is glycan biosynthesis; glycogen biosynthesis. In terms of biological role, synthesizes alpha-1,4-glucan chains using ADP-glucose. This chain is Glycogen synthase, found in Bacillus anthracis.